Consider the following 332-residue polypeptide: tRNA U34 carboxymethyltransferase (332 aa).

Carboxy-S-adenosyl-L-methionine is bound by residues lysine 96, tryptophan 110, lysine 115, glycine 135, 157–159 (DPT), 190–191 (IE), methionine 205, tyrosine 209, and arginine 324.

This sequence belongs to the class I-like SAM-binding methyltransferase superfamily. CmoB family. Homotetramer.

It catalyses the reaction carboxy-S-adenosyl-L-methionine + 5-hydroxyuridine(34) in tRNA = 5-carboxymethoxyuridine(34) in tRNA + S-adenosyl-L-homocysteine + H(+). Catalyzes carboxymethyl transfer from carboxy-S-adenosyl-L-methionine (Cx-SAM) to 5-hydroxyuridine (ho5U) to form 5-carboxymethoxyuridine (cmo5U) at position 34 in tRNAs. This is tRNA U34 carboxymethyltransferase from Alteromonas mediterranea (strain DSM 17117 / CIP 110805 / LMG 28347 / Deep ecotype).